Here is a 389-residue protein sequence, read N- to C-terminus: Succinate--CoA ligase [ADP-forming] subunit beta (389 aa).

Positions 9–236 (KELFAKHGVP…RDATDPLELK (228 aa)) constitute an ATP-grasp domain. ATP is bound by residues Lys45, 52–54 (GRG), Ser94, and Glu99. Asn191 and Asp205 together coordinate Mg(2+). Substrate contacts are provided by residues Asn256 and 318 to 320 (GIT).

It belongs to the succinate/malate CoA ligase beta subunit family. In terms of assembly, heterotetramer of two alpha and two beta subunits. Mg(2+) is required as a cofactor.

It carries out the reaction succinate + ATP + CoA = succinyl-CoA + ADP + phosphate. It catalyses the reaction GTP + succinate + CoA = succinyl-CoA + GDP + phosphate. It participates in carbohydrate metabolism; tricarboxylic acid cycle; succinate from succinyl-CoA (ligase route): step 1/1. Functionally, succinyl-CoA synthetase functions in the citric acid cycle (TCA), coupling the hydrolysis of succinyl-CoA to the synthesis of either ATP or GTP and thus represents the only step of substrate-level phosphorylation in the TCA. The beta subunit provides nucleotide specificity of the enzyme and binds the substrate succinate, while the binding sites for coenzyme A and phosphate are found in the alpha subunit. This Rhodococcus erythropolis (strain PR4 / NBRC 100887) protein is Succinate--CoA ligase [ADP-forming] subunit beta.